Reading from the N-terminus, the 435-residue chain is GPI-anchor transamidase component PIGU (435 aa).

The Cytoplasmic segment spans residues 1–3 (MAA). A helical membrane pass occupies residues 4–22 (PLALVLVVAVTVRAALFRS). Residues 23-78 (SLAEFISERVEVVSPLSSWKRVVEGLSLLDLGVSPYSGAVFHETPLIIYLFHFLID) lie on the Lumenal side of the membrane. Residues 79 to 99 (YAELVFMITDALTAIALYFAI) traverse the membrane as a helical segment. The Cytoplasmic portion of the chain corresponds to 100–136 (QDFNKVVFKKQKLLLELDQYAPDVAELIRTPMEMRYI). 4 helical membrane passes run 137-158 (PLKV…VAKS), 159-178 (TCAI…IKGS), 179-194 (VFLS…YQTL), and 195-205 (YPVTLFAPGLL). Residues 206-222 (YLLQRQYIPVKVKSKAF) lie on the Cytoplasmic side of the membrane. Lys-216 provides a ligand contact to a cardiolipin. Residues 223–244 (WIFSWEYAMMYIGSLVVIVCLS) traverse the membrane as a helical segment. Residues 245 to 286 (FFLLSSWDFIPAVYGFILSVPDLTPNIGLFWYFFAEMFEHFS) lie on the Lumenal side of the membrane. The helical transmembrane segment at 287–306 (LFFVCVFQINVFFYTVPLAI) threads the bilayer. Over 307–311 (KLKEH) the chain is Cytoplasmic. Lys-309 contacts a cardiolipin. Helical transmembrane passes span 312–331 (PIFF…SYPT) and 332–345 (VGDV…FPVW). The Cytoplasmic segment spans residues 346 to 354 (NHLYRFLRN). The helical transmembrane segment at 355-372 (VFVLTCIIVVCSLLFPVL) threads the bilayer. Residues 373-384 (WHLWIYAGSANS) are Lumenal-facing. The a 2-acyl-6-[6-phosphoethanolamine-alpha-D-mannosyl-(1-&gt;2)-6-phosphoethanolamine-alpha-D-mannosyl-(1-&gt;6)-2-phosphoethanolamine-alpha-D-mannosyl-(1-&gt;4)-alpha-D-glucosaminyl]-1-(1-radyl,2-acyl-sn-glycero-3-phospho)-1D-myo-inositol site is built by Asn-383 and Asn-385. A helical membrane pass occupies residues 385 to 406 (NFFYAITLTFNVGQILLISDYF). Over 407–435 (YAFLRREYYLTHGLYLTAKDGTEAMLVLK) the chain is Cytoplasmic.

This sequence belongs to the PIGU family. Heteropentamer. Part of the GPI-anchor transamidase complex, consisting of PIGK, PIGT, PIGS, PIGU and GAA1.

It is found in the endoplasmic reticulum membrane. It participates in glycolipid biosynthesis; glycosylphosphatidylinositol-anchor biosynthesis. Its function is as follows. Component of the glycosylphosphatidylinositol-anchor (GPI-anchor) transamidase (GPI-T) complex that catalyzes the formation of the linkage between a proprotein and a GPI-anchor and participates in GPI anchored protein biosynthesis. Binds the lipid portion of GPI-anchor. May act as an organizer in the transmembrane layer to recruit other subunits, and thus is essential for assembly of the complex. This is GPI-anchor transamidase component PIGU from Cricetulus griseus (Chinese hamster).